We begin with the raw amino-acid sequence, 655 residues long: FYVE, RhoGEF and PH domain-containing protein 2 (655 aa).

Residues S10, S39, and S47 each carry the phosphoserine modification. Disordered regions lie at residues 21 to 52 (NRTP…EPWE) and 84 to 103 (WRRS…EPEE). The span at 32-41 (SLEDQPHSPE) shows a compositional bias: basic and acidic residues. The 189-residue stretch at 102–290 (EEKRVVRELL…FSAAQHSNAA (189 aa)) folds into the DH domain. In terms of domain architecture, PH 1 spans 319–418 (TLLREGPVLK…WMQACQAAID (100 aa)). The FYVE-type zinc-finger motif lies at 458–518 (DKMVTMCMRC…VCLTCYTFLT (61 aa)). Zn(2+)-binding residues include C464, C467, C481, C484, C489, C492, C510, and C513. A PH 2 domain is found at 544-641 (QSLVCSFLQL…WVTAIKRAAS (98 aa)). T644 carries the post-translational modification Phosphothreonine. A Phosphoserine modification is found at S654.

Lymph node, spleen, B-lymphocytes and macrophages (at protein level). Expressed at high levels in lymph node, spleen, B-lymphocytes and bone marrow macrophages. Expressed at lower levels in mature bone marrow dendritic cells. In both immature and mature B-cells, expression is down-regulated by prior B-cell receptor signaling. Expression remains high in resting B and memory cells but declines upon differentiation into plasma cells.

Its subcellular location is the cytoplasm. It is found in the nucleus. The protein resides in the early endosome. The protein localises to the early endosome membrane. It localises to the cell projection. Its subcellular location is the ruffle membrane. It is found in the cytoskeleton. Its function is as follows. Activates CDC42, a member of the Ras-like family of Rho- and Rac proteins, by exchanging bound GDP for free GTP. Activates JNK1 via CDC42 but not RAC1. Binds to phosphatidylinositol 4,5-bisphosphate, phosphatidylinositol 3,4,5-trisphosphate, phosphatidylinositol 5-monophosphate, phosphatidylinositol 4-monophosphate and phosphatidylinositol 3-monophosphate. The polypeptide is FYVE, RhoGEF and PH domain-containing protein 2 (Fgd2) (Mus musculus (Mouse)).